A 293-amino-acid chain; its full sequence is MTNQQDYTQDNDKLYRYLFQHRAVRGEWVRLNKTFTDTLNTHQYPKAVQDLLGEMMVATNLLTATLKFAGNITVQIQGDGPLRLALVNGNDQQQIRALARVDGNITENMSLHNMIGKGVLVITIAPKEGERYQGVISLDKPTITECLEDYFVRSEQLQTQLIIRTGEYEGKPVAAGMLLQIMPDGSGTPEDFEHLTTLAATVKDEELFGLPAEELLYRLYHEETVNLYPAQDVQFFCGCSAERSSSALLLISDEEIDEILAEHKGSIDMQCECCGTHYFFNKEAIEKLKSTRV.

2 disulfides stabilise this stretch: C237–C239 and C271–C274.

The protein belongs to the HSP33 family. Under oxidizing conditions two disulfide bonds are formed involving the reactive cysteines. Under reducing conditions zinc is bound to the reactive cysteines and the protein is inactive.

Its subcellular location is the cytoplasm. Its function is as follows. Redox regulated molecular chaperone. Protects both thermally unfolding and oxidatively damaged proteins from irreversible aggregation. Plays an important role in the bacterial defense system toward oxidative stress. The sequence is that of 33 kDa chaperonin from Haemophilus influenzae (strain 86-028NP).